Here is a 181-residue protein sequence, read N- to C-terminus: RNA pyrophosphohydrolase (181 aa).

The Nudix hydrolase domain maps to G6 to Q149. The Nudix box motif lies at G38–G59. Residues G159–A181 form a disordered region. A compositionally biased stretch (basic residues) spans R168 to A181.

The protein belongs to the Nudix hydrolase family. RppH subfamily. It depends on a divalent metal cation as a cofactor.

Its function is as follows. Accelerates the degradation of transcripts by removing pyrophosphate from the 5'-end of triphosphorylated RNA, leading to a more labile monophosphorylated state that can stimulate subsequent ribonuclease cleavage. The sequence is that of RNA pyrophosphohydrolase from Alkalilimnicola ehrlichii (strain ATCC BAA-1101 / DSM 17681 / MLHE-1).